Reading from the N-terminus, the 1518-residue chain is Putative cellulose synthase 3 (1518 aa).

The segment at 1 to 731 (MYGTWFTTGK…EEKLEKQSFV (731 aa)) is catalytic. A run of 3 helical transmembrane segments spans residues 24 to 44 (PVWV…SVRI), 71 to 91 (ITVF…VWRL), and 105 to 125 (LAVL…LSYF). The interval 144–237 (QWPSVDVFVP…FAVIFDCDHV (94 aa)) is catalytic subdomain A. Catalysis depends on residues D186 and D330. The catalytic subdomain B stretch occupies residues 314 to 374 (EAVMGIGGFA…GQRVRWARGM (61 aa)). The next 5 membrane-spanning stretches (helical) occupy residues 404–424 (FLFA…LFLG), 428–448 (IAAS…HSVI), 465–485 (IYET…LLQP), 514–534 (ILAG…VWQF), and 543–563 (FILN…SIAV). The 100-residue stretch at 569–668 (QTRNAPRVSV…ERQVVSMVFG (100 aa)) folds into the PilZ domain. Positions 732 to 1518 (LKPVPRSARH…IARDDLTGEL (787 aa)) are cyclic di-GMP binding domain. The tract at residues 765 to 785 (APSPDQSGVTAETPFGDSNTG) is disordered. Over residues 768-785 (PDQSGVTAETPFGDSNTG) the composition is skewed to polar residues. Residues 1481 to 1501 (ALYLAGLAGAGLAALGVWAWL) form a helical membrane-spanning segment.

In the N-terminal section; belongs to the glycosyltransferase 2 family. It in the C-terminal section; belongs to the AcsB/BcsB family.

It is found in the cell inner membrane. The catalysed reaction is [(1-&gt;4)-beta-D-glucosyl](n) + UDP-alpha-D-glucose = [(1-&gt;4)-beta-D-glucosyl](n+1) + UDP + H(+). It participates in glycan metabolism; bacterial cellulose biosynthesis. The chain is Putative cellulose synthase 3 (bcsABII-B) from Komagataeibacter xylinus (Gluconacetobacter xylinus).